The following is a 189-amino-acid chain: GTP cyclohydrolase 1 (189 aa).

Zn(2+) contacts are provided by Cys-76, His-79, and Cys-149.

The protein belongs to the GTP cyclohydrolase I family. In terms of assembly, homomer.

The enzyme catalyses GTP + H2O = 7,8-dihydroneopterin 3'-triphosphate + formate + H(+). It participates in cofactor biosynthesis; 7,8-dihydroneopterin triphosphate biosynthesis; 7,8-dihydroneopterin triphosphate from GTP: step 1/1. The polypeptide is GTP cyclohydrolase 1 (Dehalococcoides mccartyi (strain ATCC BAA-2100 / JCM 16839 / KCTC 5957 / BAV1)).